A 138-amino-acid chain; its full sequence is Ribosome-binding factor A (138 aa).

A disordered region spans residues 119–138; the sequence is RSPEVQRDLGPSNEKDDEQN.

It belongs to the RbfA family. Monomer. Binds 30S ribosomal subunits, but not 50S ribosomal subunits or 70S ribosomes.

It is found in the cytoplasm. Functionally, one of several proteins that assist in the late maturation steps of the functional core of the 30S ribosomal subunit. Associates with free 30S ribosomal subunits (but not with 30S subunits that are part of 70S ribosomes or polysomes). Required for efficient processing of 16S rRNA. May interact with the 5'-terminal helix region of 16S rRNA. The protein is Ribosome-binding factor A of Agrobacterium fabrum (strain C58 / ATCC 33970) (Agrobacterium tumefaciens (strain C58)).